The chain runs to 113 residues: U11-theraphotoxin-Hhn1a (113 aa).

The first 21 residues, 1–21, serve as a signal peptide directing secretion; sequence MNTVRVTFLLVFVLAVSLGQA. Positions 22 to 74 are excised as a propeptide; sequence DKDENRMVMQEKTEQGKSYLDFAENLLLQKLEELEAKLLEEDSEESRNSRQKR. Intrachain disulfides connect C75–C90, C82–C95, and C89–C110.

Belongs to the neurotoxin 14 (magi-1) family. 01 (HNTX-16) subfamily. As to expression, expressed by the venom gland.

The protein localises to the secreted. Probable ion channel inhibitor. The sequence is that of U11-theraphotoxin-Hhn1a from Cyriopagopus hainanus (Chinese bird spider).